The sequence spans 281 residues: 2-dehydro-3-deoxyphosphooctonate aldolase (281 aa).

The protein belongs to the KdsA family.

Its subcellular location is the cytoplasm. The catalysed reaction is D-arabinose 5-phosphate + phosphoenolpyruvate + H2O = 3-deoxy-alpha-D-manno-2-octulosonate-8-phosphate + phosphate. It functions in the pathway carbohydrate biosynthesis; 3-deoxy-D-manno-octulosonate biosynthesis; 3-deoxy-D-manno-octulosonate from D-ribulose 5-phosphate: step 2/3. The protein operates within bacterial outer membrane biogenesis; lipopolysaccharide biosynthesis. In Pseudomonas fluorescens (strain Pf0-1), this protein is 2-dehydro-3-deoxyphosphooctonate aldolase.